The following is a 1113-amino-acid chain: Atrial natriuretic peptide-converting enzyme (1113 aa).

Topologically, residues 1–112 are cytoplasmic; the sequence is MGRVSFSVRV…QKLVTANLLR (112 aa). A helical; Signal-anchor for type II membrane protein transmembrane segment spans residues 113 to 133; sequence FLLLVLIPCICALIVLLAILL. Residues 134-1113 lie on the Extracellular side of the membrane; it reads SFVGTLKRVY…QTFLQKKSQG (980 aa). Residues Asn147, Asn202, and Asn208 are each glycosylated (N-linked (GlcNAc...) asparagine). The segment at 176–202 is disordered; sequence APSLPPSQSTPAWTPRAPSPEDQSHRN. Residues 201–327 form the FZ 1 domain; sequence RNTSTCMNIT…SSVRKSCFSL (127 aa). Intrachain disulfides connect Cys206–Cys266, Cys214–Cys259, Cys250–Cys290, Cys279–Cys324, Cys283–Cys307, Cys337–Cys350, Cys345–Cys363, and Cys357–Cys372. N-linked (GlcNAc...) asparagine glycosylation is found at Asn298 and Asn317. 4 LDL-receptor class A domains span residues 336–372, 373–408, 409–445, and 446–483; these read LCGG…EAHC, NCSK…EQNC, DCNL…EVNC, and SCHS…ENCS. Asn373 carries N-linked (GlcNAc...) asparagine glycosylation. 9 disulfide bridges follow: Cys374–Cys386, Cys381–Cys399, Cys393–Cys408, Cys410–Cys423, Cys418–Cys436, Cys430–Cys445, Cys447–Cys460, Cys455–Cys473, and Cys467–Cys482. Residue Asn411 is glycosylated (N-linked (GlcNAc...) asparagine). Residue Asn444 is glycosylated (N-linked (GlcNAc...) asparagine). N-linked (GlcNAc...) asparagine glycans are attached at residues Asn481, Asn519, and Asn537. One can recognise an FZ 2 domain in the interval 518-641; it reads SNCSQCEPIT…SSDNQTCLLP (124 aa). 14 cysteine pairs are disulfide-bonded: Cys523–Cys586, Cys531–Cys579, Cys570–Cys608, Cys597–Cys638, Cys601–Cys625, Cys648–Cys660, Cys655–Cys673, Cys667–Cys682, Cys684–Cys698, Cys692–Cys711, Cys705–Cys720, Cys723–Cys735, Cys730–Cys748, and Cys742–Cys757. Asn635 carries N-linked (GlcNAc...) asparagine glycosylation. 3 LDL-receptor class A domains span residues 647 to 682, 683 to 721, and 722 to 757; these read ECSP…EENC, GCKE…KNCS, and FCQD…EWGC. A glycan (N-linked (GlcNAc...) asparagine) is linked at Asn719. Residues 758 to 853 form the SRCR domain; the sequence is VTLSKNGNSS…SRSEISLLCS (96 aa). 2 N-linked (GlcNAc...) asparagine glycosylation sites follow: Asn765 and Asn828. 6 disulfides stabilise this stretch: Cys782/Cys884, Cys857/Cys979, Cys895/Cys911, Cys993/Cys1058, Cys1022/Cys1037, and Cys1048/Cys1077. Residues 869–1102 form the Peptidase S1 domain; that stretch reads ILGGRTSRPG…FVGWIERQIY (234 aa). Active-site charge relay system residues include His910 and Asp959. Asn970 carries N-linked (GlcNAc...) asparagine glycosylation. The active-site Charge relay system is the Ser1052. An N-linked (GlcNAc...) asparagine glycan is attached at Asn1089.

Belongs to the peptidase S1 family. N-glycosylated; required for processing and activation. In terms of processing, activated through proteolytic processing by a trypsin-like protease; cleaved into a N-terminal propeptide and an activated corin protease fragment. Atrial natriuretic peptide-converting enzyme, 180 kDa soluble fragment is produced by cleavage by ADAM10. Cleavage by ADAM10 to produce soluble 180 kDa soluble fragment takes place after the transmembrane region and before FZ 1. Post-translationally, a disulfide bond links the activated corin protease fragment and the N-terminal propeptide. The disulfide bond also links the activated corin protease fragment with Atrial natriuretic peptide-converting enzyme, 180 kDa soluble fragment. Highly expressed in heart. Also expressed in pregnant uterus.

The protein resides in the cell membrane. It is found in the secreted. Functionally, serine-type endopeptidase involved in atrial natriuretic peptide (NPPA) processing. Converts through proteolytic cleavage the non-functional propeptide NPPA into the active hormone, thereby regulating blood pressure in heart and promoting natriuresis, diuresis and vasodilation. Proteolytic cleavage of pro-NPPA also plays a role in female pregnancy by promoting trophoblast invasion and spiral artery remodeling in uterus. Also acts as a regulator of sodium reabsorption in kidney. May also process pro-NPPB the B-type natriuretic peptide. In Mus musculus (Mouse), this protein is Atrial natriuretic peptide-converting enzyme (Corin).